A 260-amino-acid chain; its full sequence is Methanethiol S-methyltransferase (260 aa).

Helical transmembrane passes span 27 to 47, 55 to 75, 107 to 127, 134 to 154, and 196 to 216; these read CYLF…GIGV, PGIT…LFAA, CLVL…VWNV, GLLI…TFLI, and FLIA…FAIL.

The protein belongs to the nurim family.

It is found in the membrane. It carries out the reaction methanethiol + S-adenosyl-L-methionine = dimethyl sulfide + S-adenosyl-L-homocysteine + H(+). Its function is as follows. Catalyzes the methylation of methanethiol (MeSH) to yield dimethylsulphide (DMS). This Pseudomonas sp. (strain GM41(2012)) protein is Methanethiol S-methyltransferase.